The sequence spans 317 residues: MSDSAFVNGGREVSSLPLSAQMPGMASAADWVTLLKPRVMSLVVFTGLIGMLVAPGSLHPVLGAIAILCIAVATGASGAINMWYDRDIDAVMRRTKNRPIPAGRIEPGEALGYGIVLAVGSVLVMWLATNVVAAAVLAFAIFFYSVIYTMWLKRSTPQNIVIGGAAGAFPPVIGWAAVTGTIDLMPVMMFAIVFFWTPPHFWSLSLWAQMDYERAGVPMLPVVAGARKTRQHIMAYTVLLSVIAVLPWALGDTGRVYGLSAVVLSLGFLVQSWRVLRDKQDEVGLSLTKDAPARAAFKYSLIYLAVLFLALAVDRFV.

Helical transmembrane passes span 39–58 (VMSL…PGSL), 62–84 (LGAI…NMWY), 100–120 (IPAG…LAVG), 123–143 (LVMW…AIFF), 160–180 (IVIG…AVTG), 184–204 (LMPV…FWSL), 233–253 (IMAY…LGDT), 256–276 (VYGL…WRVL), and 293–313 (ARAA…ALAV).

The protein belongs to the UbiA prenyltransferase family. Protoheme IX farnesyltransferase subfamily.

The protein resides in the cell inner membrane. It carries out the reaction heme b + (2E,6E)-farnesyl diphosphate + H2O = Fe(II)-heme o + diphosphate. It functions in the pathway porphyrin-containing compound metabolism; heme O biosynthesis; heme O from protoheme: step 1/1. In terms of biological role, converts heme B (protoheme IX) to heme O by substitution of the vinyl group on carbon 2 of heme B porphyrin ring with a hydroxyethyl farnesyl side group. The polypeptide is Protoheme IX farnesyltransferase (Granulibacter bethesdensis (strain ATCC BAA-1260 / CGDNIH1)).